Here is a 420-residue protein sequence, read N- to C-terminus: MIDLRLLREDPDAVRASQRARGEDPALVDALLEADAARRAAVATADNLRAEQKAMSKQIGKAPKEERSALLARAQELSVKVKEAEAAQHAADADLDAAHRALSNVVLPAVPAGGEDDYVVLETVGTPPEFDFEPKDHLELGEALGLMDMERGAKVSGSRFYFLTGHGALLQLGLLQLAAQKAVANGFTMMIPPVLVRPEVMAGTGFLGRHAAEVYHLADDDMYLVGTSEVPLAGYHADEILDLSAGPKRYAGWSSCFRREAGSYGKDTRGIIRVHQFDKVEMFVYTTPDQAEAEHERLLAWEREMLAAIEVPYRIIDVAAGDLGSSAARKFDCEAWVPSQQTYRELTSTSNCTTFQARRLSVRYRDENGKPQIAATLNGTLATTRWIVAILENHQRADGSVRVPAALVPFVGTDVLRPPA.

227–229 (TSE) provides a ligand contact to L-serine. ATP contacts are provided by residues 258 to 260 (RRE) and Val274. Residue Glu281 participates in L-serine binding. 345–348 (ELTS) provides a ligand contact to ATP. Residue Thr380 coordinates L-serine.

The protein belongs to the class-II aminoacyl-tRNA synthetase family. Type-1 seryl-tRNA synthetase subfamily. Homodimer. The tRNA molecule binds across the dimer.

Its subcellular location is the cytoplasm. It carries out the reaction tRNA(Ser) + L-serine + ATP = L-seryl-tRNA(Ser) + AMP + diphosphate + H(+). The catalysed reaction is tRNA(Sec) + L-serine + ATP = L-seryl-tRNA(Sec) + AMP + diphosphate + H(+). The protein operates within aminoacyl-tRNA biosynthesis; selenocysteinyl-tRNA(Sec) biosynthesis; L-seryl-tRNA(Sec) from L-serine and tRNA(Sec): step 1/1. Functionally, catalyzes the attachment of serine to tRNA(Ser). Is also able to aminoacylate tRNA(Sec) with serine, to form the misacylated tRNA L-seryl-tRNA(Sec), which will be further converted into selenocysteinyl-tRNA(Sec). This Nocardia farcinica (strain IFM 10152) protein is Serine--tRNA ligase.